An 83-amino-acid polypeptide reads, in one-letter code: Evasin P1124 (83 aa).

The N-terminal stretch at 1 to 28 is a signal peptide; it reads MAVNVFTILQLAVFAAIVLNVNLHSVSA. 3 cysteine pairs are disulfide-bonded: C48–C66, C52–C68, and C62–C79. N-linked (GlcNAc...) asparagine glycosylation occurs at N51.

The protein localises to the secreted. Functionally, salivary chemokine-binding protein which binds to host chemokines CXCL1, CXCL2, CXCL3, CXCL5, CXCL6, CXCL12 and CXCL13. The sequence is that of Evasin P1124 from Ixodes ricinus (Common tick).